A 47-amino-acid polypeptide reads, in one-letter code: Snake venom metalloproteinase jararafibrase-4 (47 aa).

Residues 6-47 form the Peptidase M12B domain; it reads RYIELFLVVDHGMFMKYNGNSDKIYYYIHQMVNIMKXAYXYL. Glutamate 9 lines the Ca(2+) pocket.

This sequence belongs to the venom metalloproteinase (M12B) family. As to quaternary structure, monomer. Zn(2+) is required as a cofactor. As to expression, expressed by the venom gland.

It is found in the secreted. Its activity is regulated as follows. Inhibited by 1,10-phenanthroline and EDTA. Functionally, the metalloproteinase is a probable venom zinc protease that induces local hemorrhage in the skin of rats. Degrades type-IV collagen, gelatin, laminin and fibronectin. Has fibrinolytic activities. Has high hemagglutinating activity on red blood cells. Cleaves insulin B chain at 29-His-|-Leu-30, and 38-Ala-|-Leu-39 bonds. The sequence is that of Snake venom metalloproteinase jararafibrase-4 from Bothrops jararaca (Jararaca).